Reading from the N-terminus, the 1145-residue chain is Protein STU1 (1145 aa).

HEAT repeat units lie at residues 96-134 (TLPL…EKYV) and 168-206 (YVPV…KSDL). Disordered regions lie at residues 226–271 (ELIP…GIDT), 510–793 (LLNK…VVDP), and 816–839 (PEPV…PAAS). A compositionally biased stretch (low complexity) spans 229–239 (PTSSRPETPAA). Positions 535–545 (SKSTMGTSKPS) are enriched in polar residues. Composition is skewed to low complexity over residues 580–594 (TTTT…SGAR), 663–676 (ASHA…SPSS), and 696–708 (QSQS…SSPS).

Belongs to the CLASP family. As to quaternary structure, interacts with microtubules.

Its subcellular location is the cytoplasm. It is found in the cytoskeleton. It localises to the nucleus. The protein localises to the spindle. Functionally, microtubule binding protein that promotes the stabilization of dynamic microtubules. Required for mitotic spindle formation. This Gibberella zeae (strain ATCC MYA-4620 / CBS 123657 / FGSC 9075 / NRRL 31084 / PH-1) (Wheat head blight fungus) protein is Protein STU1 (STU1).